The primary structure comprises 623 residues: Cilia- and flagella-associated protein 52 (623 aa).

WD repeat units follow at residues 65 to 109 (GHGN…LMAR), 112 to 153 (LHKG…AICG), 159 to 198 (LNVG…RKIW), 291 to 330 (QLQG…ETLI), 333 to 372 (CHFE…ELLR), 375 to 414 (VPNM…LMYV), 418 to 457 (AHRI…QKLE), 462 to 501 (EHKS…RNQM), 503 to 544 (LANT…RELD), 546 to 585 (SLSG…VTHV), and 588 to 623 (GHSG…PFPS).

Belongs to the CFAP52 family. As to quaternary structure, microtubule inner protein component of sperm flagellar doublet microtubules. Interacts with BRCA2. Interacts with the CCT chaperonin complex. Interacts with HSP70. Interacts with AK8. Interacts with CFAP45. Interacts with DNAI1. Interacts with IQDC. As to expression, expressed in trachea multiciliated cells.

The protein localises to the cytoplasm. Its subcellular location is the cytoskeleton. The protein resides in the cilium axoneme. It localises to the flagellum axoneme. Microtubule inner protein (MIP) part of the dynein-decorated doublet microtubules (DMTs) in cilia axoneme. Important for proper ciliary and flagellar beating. May act in cooperation with CFAP45 and axonemal dynein subunit DNAH11. May play a role in cell growth and/or survival. The protein is Cilia- and flagella-associated protein 52 (CFAP52) of Bos taurus (Bovine).